The sequence spans 209 residues: Ribosomal RNA large subunit methyltransferase E (209 aa).

Residues Gly63, Trp65, Asp83, Asp99, and Asp124 each contribute to the S-adenosyl-L-methionine site. Catalysis depends on Lys164, which acts as the Proton acceptor.

This sequence belongs to the class I-like SAM-binding methyltransferase superfamily. RNA methyltransferase RlmE family.

It is found in the cytoplasm. The enzyme catalyses uridine(2552) in 23S rRNA + S-adenosyl-L-methionine = 2'-O-methyluridine(2552) in 23S rRNA + S-adenosyl-L-homocysteine + H(+). Its function is as follows. Specifically methylates the uridine in position 2552 of 23S rRNA at the 2'-O position of the ribose in the fully assembled 50S ribosomal subunit. The protein is Ribosomal RNA large subunit methyltransferase E of Shewanella woodyi (strain ATCC 51908 / MS32).